A 416-amino-acid polypeptide reads, in one-letter code: Cysteate synthase (416 aa).

An N6-(pyridoxal phosphate)lysine modification is found at Lys104. Asn130 is a binding site for pyridoxal 5'-phosphate.

The protein belongs to the threonine synthase family. Cysteate synthase subfamily. Homotrimer. Pyridoxal 5'-phosphate serves as cofactor.

It carries out the reaction O-phospho-L-serine + sulfite + H(+) = L-cysteate + phosphate. The protein operates within cofactor biosynthesis; coenzyme M biosynthesis. Its function is as follows. Specifically catalyzes the beta-elimination of phosphate from L-phosphoserine and the beta-addition of sulfite to the dehydroalanine intermediate to produce L-cysteate. The polypeptide is Cysteate synthase (Methanosarcina mazei (strain ATCC BAA-159 / DSM 3647 / Goe1 / Go1 / JCM 11833 / OCM 88) (Methanosarcina frisia)).